Consider the following 144-residue polypeptide: Large ribosomal subunit protein uL15 (144 aa).

The segment at 1-62 (MELNNLKPAE…GQMPLQRRLP (62 aa)) is disordered. Residues 21–31 (RGIGSGLGKTA) show a composition bias toward gly residues.

It belongs to the universal ribosomal protein uL15 family. In terms of assembly, part of the 50S ribosomal subunit.

In terms of biological role, binds to the 23S rRNA. This Paraburkholderia phymatum (strain DSM 17167 / CIP 108236 / LMG 21445 / STM815) (Burkholderia phymatum) protein is Large ribosomal subunit protein uL15.